Reading from the N-terminus, the 271-residue chain is 3-methyl-2-oxobutanoate hydroxymethyltransferase (271 aa).

2 residues coordinate Mg(2+): Asp-51 and Asp-90. Residues 51–52, Asp-90, and Lys-119 contribute to the 3-methyl-2-oxobutanoate site; that span reads DS. Glu-121 contacts Mg(2+). Catalysis depends on Glu-188, which acts as the Proton acceptor.

The protein belongs to the PanB family. As to quaternary structure, homodecamer; pentamer of dimers. Mg(2+) is required as a cofactor.

The protein resides in the cytoplasm. The enzyme catalyses 3-methyl-2-oxobutanoate + (6R)-5,10-methylene-5,6,7,8-tetrahydrofolate + H2O = 2-dehydropantoate + (6S)-5,6,7,8-tetrahydrofolate. Its pathway is cofactor biosynthesis; (R)-pantothenate biosynthesis; (R)-pantoate from 3-methyl-2-oxobutanoate: step 1/2. Its function is as follows. Catalyzes the reversible reaction in which hydroxymethyl group from 5,10-methylenetetrahydrofolate is transferred onto alpha-ketoisovalerate to form ketopantoate. The sequence is that of 3-methyl-2-oxobutanoate hydroxymethyltransferase from Aromatoleum aromaticum (strain DSM 19018 / LMG 30748 / EbN1) (Azoarcus sp. (strain EbN1)).